Consider the following 202-residue polypeptide: Securin (202 aa).

Positions 36-55 (DGRSQVSTPHVGKMFDAPPA) are disordered. The D-box signature appears at 61–64 (RKAL). 2 short sequence motifs (TEK-box) span residues 71–73 (TEK) and 94–96 (TEK). The SH3-binding motif lies at 163–173 (PPSPLKMPPLL). Ser-165 is modified (phosphoserine; by CDK1).

Belongs to the securin family. Interacts with RPS10 and DNAJA1. Interacts with the caspase-like ESPL1, and prevents its protease activity probably by covering its active site. Interacts with TP53 and blocks its activity probably by blocking its binding to DNA. Interacts with the Ku 70 kDa subunit of ds-DNA kinase. Interacts with PTTG1IP. Post-translationally, phosphorylated at Ser-165 by CDK1 during mitosis. Phosphorylated in vitro by ds-DNA kinase. In terms of processing, ubiquitinated through 'Lys-11' linkage of ubiquitin moieties by the anaphase promoting complex (APC) at the onset of anaphase, conducting to its degradation. 'Lys-11'-linked ubiquitination is mediated by the E2 ligase UBE2C/UBCH10.

Its subcellular location is the cytoplasm. The protein resides in the nucleus. Its function is as follows. Regulatory protein, which plays a central role in chromosome stability, in the p53/TP53 pathway, and DNA repair. Probably acts by blocking the action of key proteins. During the mitosis, it blocks Separase/ESPL1 function, preventing the proteolysis of the cohesin complex and the subsequent segregation of the chromosomes. At the onset of anaphase, it is ubiquitinated, conducting to its destruction and to the liberation of ESPL1. Its function is however not limited to a blocking activity, since it is required to activate ESPL1. Negatively regulates the transcriptional activity and related apoptosis activity of TP53. The negative regulation of TP53 may explain the strong transforming capability of the protein when it is overexpressed. May also play a role in DNA repair via its interaction with Ku, possibly by connecting DNA damage-response pathways with sister chromatid separation. The polypeptide is Securin (PTTG1) (Bos taurus (Bovine)).